The chain runs to 75 residues: ATP synthase subunit c (75 aa).

Transmembrane regions (helical) follow at residues 8–28 (FIAI…IANI) and 52–72 (IGAA…MLLI).

Belongs to the ATPase C chain family. In terms of assembly, F-type ATPases have 2 components, F(1) - the catalytic core - and F(0) - the membrane proton channel. F(1) has five subunits: alpha(3), beta(3), gamma(1), delta(1), epsilon(1). F(0) has three main subunits: a(1), b(2) and c(10-14). The alpha and beta chains form an alternating ring which encloses part of the gamma chain. F(1) is attached to F(0) by a central stalk formed by the gamma and epsilon chains, while a peripheral stalk is formed by the delta and b chains.

The protein resides in the cell membrane. In terms of biological role, f(1)F(0) ATP synthase produces ATP from ADP in the presence of a proton or sodium gradient. F-type ATPases consist of two structural domains, F(1) containing the extramembraneous catalytic core and F(0) containing the membrane proton channel, linked together by a central stalk and a peripheral stalk. During catalysis, ATP synthesis in the catalytic domain of F(1) is coupled via a rotary mechanism of the central stalk subunits to proton translocation. Key component of the F(0) channel; it plays a direct role in translocation across the membrane. A homomeric c-ring of between 10-14 subunits forms the central stalk rotor element with the F(1) delta and epsilon subunits. The protein is ATP synthase subunit c of Wolbachia pipientis wMel.